An 88-amino-acid polypeptide reads, in one-letter code: Conotoxin Gm9.1 (88 aa).

The signal sequence occupies residues 1–27; sequence MHLSLARSAVLMLLLLFALGNFVVVQS. The propeptide occupies 28–58; that stretch reads GLITRDVDNGQLTDNRRNLQTEWNPLSLFMS. 3 disulfide bridges follow: C62-C76, C66-C78, and C72-C83. Asparagine amide is present on N87.

The protein belongs to the conotoxin P superfamily. In terms of tissue distribution, expressed by the venom duct.

It localises to the secreted. Functionally, neurotoxin. In vivo, elicits 'spasmodic' symptomatology. The sequence is that of Conotoxin Gm9.1 from Conus gloriamaris (Glory-of-the-Sea cone).